The following is a 125-amino-acid chain: uncharacterized protein (125 aa).

One can recognise an HTH cro/C1-type domain in the interval 19–73; the sequence is IYSLRLAKGLSRQQLAEVIDVTHQQLQKYEKAINRISVGRLVLIAEALDRNIDYF. The H-T-H motif DNA-binding region spans 30–49; sequence RQQLAEVIDVTHQQLQKYEK.

This is an uncharacterized protein from Rickettsia conorii (strain ATCC VR-613 / Malish 7).